A 377-amino-acid polypeptide reads, in one-letter code: tRNA(Met) cytidine acetate ligase (377 aa).

Residues 7 to 20 (ITEYNPFHNGHLYH), G101, N152, and R179 contribute to the ATP site.

Belongs to the TmcAL family.

The protein localises to the cytoplasm. It catalyses the reaction cytidine(34) in elongator tRNA(Met) + acetate + ATP = N(4)-acetylcytidine(34) in elongator tRNA(Met) + AMP + diphosphate. Its function is as follows. Catalyzes the formation of N(4)-acetylcytidine (ac(4)C) at the wobble position of elongator tRNA(Met), using acetate and ATP as substrates. First activates an acetate ion to form acetyladenylate (Ac-AMP) and then transfers the acetyl group to tRNA to form ac(4)C34. The protein is tRNA(Met) cytidine acetate ligase of Oenococcus oeni (strain ATCC BAA-331 / PSU-1).